The primary structure comprises 356 residues: Isocitrate dehydrogenase [NAD] subunit 1, mitochondrial (356 aa).

Residues Arg106, Arg137, and Asp224 each contribute to the substrate site. Residue Asp224 participates in Mg(2+) binding.

Belongs to the isocitrate and isopropylmalate dehydrogenases family. As to quaternary structure, octamer of two non-identical subunits IDH1 and IDH2. Mg(2+) serves as cofactor. Mn(2+) is required as a cofactor.

It is found in the mitochondrion. It carries out the reaction D-threo-isocitrate + NAD(+) = 2-oxoglutarate + CO2 + NADH. Its function is as follows. Performs an essential role in the oxidative function of the citric acid cycle. Also binds RNA; specifically to the 5'-untranslated leaders of mitochondrial mRNAs. The protein is Isocitrate dehydrogenase [NAD] subunit 1, mitochondrial (idh1) of Schizosaccharomyces pombe (strain 972 / ATCC 24843) (Fission yeast).